The sequence spans 394 residues: Phosphoglycerate kinase (394 aa).

Substrate contacts are provided by residues D21–N23, R36, H59–R62, R118, and R151. Residues K202, E324, and G350–S353 contribute to the ATP site.

It belongs to the phosphoglycerate kinase family. Monomer.

It localises to the cytoplasm. The catalysed reaction is (2R)-3-phosphoglycerate + ATP = (2R)-3-phospho-glyceroyl phosphate + ADP. The protein operates within carbohydrate degradation; glycolysis; pyruvate from D-glyceraldehyde 3-phosphate: step 2/5. In Exiguobacterium sibiricum (strain DSM 17290 / CCUG 55495 / CIP 109462 / JCM 13490 / 255-15), this protein is Phosphoglycerate kinase.